Here is a 424-residue protein sequence, read N- to C-terminus: Glutamate-1-semialdehyde 2,1-aminomutase (424 aa).

Lysine 258 carries the N6-(pyridoxal phosphate)lysine modification.

The protein belongs to the class-III pyridoxal-phosphate-dependent aminotransferase family. HemL subfamily. Requires pyridoxal 5'-phosphate as cofactor.

The protein localises to the cytoplasm. It carries out the reaction (S)-4-amino-5-oxopentanoate = 5-aminolevulinate. It participates in porphyrin-containing compound metabolism; protoporphyrin-IX biosynthesis; 5-aminolevulinate from L-glutamyl-tRNA(Glu): step 2/2. The protein is Glutamate-1-semialdehyde 2,1-aminomutase of Pyrobaculum islandicum (strain DSM 4184 / JCM 9189 / GEO3).